The following is a 1138-amino-acid chain: Pesticidal crystal protein Cry7Aa (1138 aa).

It belongs to the delta endotoxin family.

In terms of biological role, promotes colloidosmotic lysis by binding to the midgut epithelial cells of Coleoptera. This protein is not toxic in its natural form. It is highly toxic to Colorado potato beetle larvae after an in vitro solubilization and trypsin activation step. The chain is Pesticidal crystal protein Cry7Aa (cry7Aa) from Bacillus thuringiensis.